The primary structure comprises 130 residues: Small ribosomal subunit protein uS8 (130 aa).

It belongs to the universal ribosomal protein uS8 family. Part of the 30S ribosomal subunit.

Functionally, one of the primary rRNA binding proteins, it binds directly to 16S rRNA central domain where it helps coordinate assembly of the platform of the 30S subunit. This chain is Small ribosomal subunit protein uS8, found in Halorubrum lacusprofundi (strain ATCC 49239 / DSM 5036 / JCM 8891 / ACAM 34).